Here is a 205-residue protein sequence, read N- to C-terminus: uncharacterized protein (205 aa).

This is an uncharacterized protein from Bacillus subtilis (strain 168).